The sequence spans 102 residues: Citrate lyase acyl carrier protein (102 aa).

Serine 14 is subject to O-(phosphoribosyl dephospho-coenzyme A)serine.

It belongs to the CitD family. In terms of assembly, oligomer with a subunit composition of (alpha,beta,gamma)6.

It is found in the cytoplasm. Covalent carrier of the coenzyme of citrate lyase. This chain is Citrate lyase acyl carrier protein, found in Streptococcus equi subsp. equi (strain 4047).